The primary structure comprises 575 residues: Inactive terpenoid synthase 20, chloroplastic (575 aa).

The N-terminal 52 residues, Met-1–Asn-52, are a transit peptide targeting the chloroplast. The Mg(2+) site is built by Asp-332, Asp-336, Asp-474, Thr-478, and Glu-482. A DDXXD motif motif is present at residues Asp-332–Asp-336.

The protein belongs to the terpene synthase family. Tpsa subfamily. As to expression, predominantly expressed in roots but also in leaves and stems.

The protein localises to the plastid. It is found in the chloroplast. Does not possess diterpene synthase activity. This chain is Inactive terpenoid synthase 20, chloroplastic, found in Arabidopsis thaliana (Mouse-ear cress).